Reading from the N-terminus, the 523-residue chain is 2-isopropylmalate synthase (523 aa).

The Pyruvate carboxyltransferase domain occupies valine 5 to tryptophan 267. Aspartate 14, histidine 202, histidine 204, and asparagine 238 together coordinate Mn(2+). The segment at arginine 392–valine 523 is regulatory domain.

The protein belongs to the alpha-IPM synthase/homocitrate synthase family. LeuA type 1 subfamily. As to quaternary structure, homodimer. Mn(2+) is required as a cofactor.

Its subcellular location is the cytoplasm. The enzyme catalyses 3-methyl-2-oxobutanoate + acetyl-CoA + H2O = (2S)-2-isopropylmalate + CoA + H(+). It participates in amino-acid biosynthesis; L-leucine biosynthesis; L-leucine from 3-methyl-2-oxobutanoate: step 1/4. Catalyzes the condensation of the acetyl group of acetyl-CoA with 3-methyl-2-oxobutanoate (2-ketoisovalerate) to form 3-carboxy-3-hydroxy-4-methylpentanoate (2-isopropylmalate). The chain is 2-isopropylmalate synthase from Salmonella newport (strain SL254).